A 116-amino-acid polypeptide reads, in one-letter code: Cocaine- and amphetamine-regulated transcript protein (116 aa).

The first 27 residues, 1-27 (MESPRLRLLPLLGAALLLLLPLLGALA), serve as a signal peptide directing secretion. Tyr41 bears the Phosphotyrosine mark. Ser48 is modified (phosphoserine). Disulfide bonds link Cys82/Cys100, Cys88/Cys108, and Cys102/Cys115.

Belongs to the CART family.

The protein localises to the secreted. In terms of biological role, satiety factor closely associated with the actions of leptin and neuropeptide y; this anorectic peptide inhibits both normal and starvation-induced feeding and completely blocks the feeding response induced by neuropeptide Y and regulated by leptin in the hypothalamus. The chain is Cocaine- and amphetamine-regulated transcript protein (CARTPT) from Bos taurus (Bovine).